A 121-amino-acid chain; its full sequence is SPbeta prophage-derived uncharacterized protein YorW (121 aa).

This is SPbeta prophage-derived uncharacterized protein YorW (yorW) from Bacillus subtilis (strain 168).